The chain runs to 503 residues: Phenylalanine--tRNA ligase alpha subunit (503 aa).

Ser-2 is subject to N-acetylserine. The tract at residues 2 to 173 (SDFQLEILKK…KRKLIAQGKI (172 aa)) is contains the major tRNA-Phe binding sites. Residues Thr-333, 374–376 (QVE), and Tyr-414 contribute to the L-phenylalanine site. Mg(2+) is bound at residue Glu-416. L-phenylalanine is bound at residue Phe-440.

Belongs to the class-II aminoacyl-tRNA synthetase family. Phe-tRNA synthetase alpha subunit type 2 subfamily. Tetramer of two alpha and two beta subunits. The cofactor is Mg(2+).

It localises to the cytoplasm. The enzyme catalyses tRNA(Phe) + L-phenylalanine + ATP = L-phenylalanyl-tRNA(Phe) + AMP + diphosphate + H(+). The chain is Phenylalanine--tRNA ligase alpha subunit (FRS2) from Saccharomyces cerevisiae (strain ATCC 204508 / S288c) (Baker's yeast).